The primary structure comprises 212 residues: ATP-dependent Clp protease proteolytic subunit (212 aa).

The Nucleophile role is filled by S113. The active site involves H138.

It belongs to the peptidase S14 family. Fourteen ClpP subunits assemble into 2 heptameric rings which stack back to back to give a disk-like structure with a central cavity, resembling the structure of eukaryotic proteasomes.

Its subcellular location is the cytoplasm. The catalysed reaction is Hydrolysis of proteins to small peptides in the presence of ATP and magnesium. alpha-casein is the usual test substrate. In the absence of ATP, only oligopeptides shorter than five residues are hydrolyzed (such as succinyl-Leu-Tyr-|-NHMec, and Leu-Tyr-Leu-|-Tyr-Trp, in which cleavage of the -Tyr-|-Leu- and -Tyr-|-Trp bonds also occurs).. Its function is as follows. Cleaves peptides in various proteins in a process that requires ATP hydrolysis. Has a chymotrypsin-like activity. Plays a major role in the degradation of misfolded proteins. This Saccharophagus degradans (strain 2-40 / ATCC 43961 / DSM 17024) protein is ATP-dependent Clp protease proteolytic subunit.